A 524-amino-acid chain; its full sequence is GMP synthase [glutamine-hydrolyzing] (524 aa).

The 190-residue stretch at 10-199 (PVLVVDFGAQ…LTEVAGLEQT (190 aa)) folds into the Glutamine amidotransferase type-1 domain. The active-site Nucleophile is the Cys-87. Active-site residues include His-173 and Glu-175. Positions 200-398 (WTSANIAQQL…LGLPEEIVAR (199 aa)) constitute a GMPS ATP-PPase domain. 228–234 (SGGVDSA) provides a ligand contact to ATP.

Homodimer.

It catalyses the reaction XMP + L-glutamine + ATP + H2O = GMP + L-glutamate + AMP + diphosphate + 2 H(+). It participates in purine metabolism; GMP biosynthesis; GMP from XMP (L-Gln route): step 1/1. In terms of biological role, catalyzes the synthesis of GMP from XMP. The polypeptide is GMP synthase [glutamine-hydrolyzing] (guaA) (Corynebacterium ammoniagenes (Brevibacterium ammoniagenes)).